The chain runs to 509 residues: Maturase K (509 aa).

Belongs to the intron maturase 2 family. MatK subfamily.

It localises to the plastid. The protein localises to the chloroplast. Usually encoded in the trnK tRNA gene intron. Probably assists in splicing its own and other chloroplast group II introns. The chain is Maturase K from Nicotiana alata (Winged tobacco).